A 215-amino-acid chain; its full sequence is uncharacterized protein (215 aa).

Residues Gly53, Glu74, and Asp97 each contribute to the S-adenosyl-L-methionine site.

It belongs to the methyltransferase superfamily. YrrT family.

In terms of biological role, could be a S-adenosyl-L-methionine-dependent methyltransferase. This is an uncharacterized protein from Geobacillus kaustophilus (strain HTA426).